We begin with the raw amino-acid sequence, 327 residues long: DNA-directed RNA polymerase subunit alpha (327 aa).

Residues 1–233 (MVREKVKVST…NLFIPFLHVE (233 aa)) are alpha N-terminal domain (alpha-NTD). Residues 266–327 (EQGFQYIFID…KKILDILEKK (62 aa)) are alpha C-terminal domain (alpha-CTD).

This sequence belongs to the RNA polymerase alpha chain family. In terms of assembly, in plastids the minimal PEP RNA polymerase catalytic core is composed of four subunits: alpha, beta, beta', and beta''. When a (nuclear-encoded) sigma factor is associated with the core the holoenzyme is formed, which can initiate transcription.

It localises to the plastid. The protein resides in the chloroplast. It catalyses the reaction RNA(n) + a ribonucleoside 5'-triphosphate = RNA(n+1) + diphosphate. In terms of biological role, DNA-dependent RNA polymerase catalyzes the transcription of DNA into RNA using the four ribonucleoside triphosphates as substrates. This Barbarea verna (Land cress) protein is DNA-directed RNA polymerase subunit alpha.